We begin with the raw amino-acid sequence, 543 residues long: Chaperonin GroEL 2 (543 aa).

ATP contacts are provided by residues 29-32 (TLGP), 86-90 (DGTTT), Gly413, and Asp495. The interval 524 to 543 (KPEPKENAPTGAGMGGDFDY) is disordered.

The protein belongs to the chaperonin (HSP60) family. Forms a cylinder of 14 subunits composed of two heptameric rings stacked back-to-back. Interacts with the co-chaperonin GroES.

The protein localises to the cytoplasm. It catalyses the reaction ATP + H2O + a folded polypeptide = ADP + phosphate + an unfolded polypeptide.. Together with its co-chaperonin GroES, plays an essential role in assisting protein folding. The GroEL-GroES system forms a nano-cage that allows encapsulation of the non-native substrate proteins and provides a physical environment optimized to promote and accelerate protein folding. In Acaryochloris marina (strain MBIC 11017), this protein is Chaperonin GroEL 2.